Reading from the N-terminus, the 193-residue chain is Putative 3-methyladenine DNA glycosylase (193 aa).

The protein belongs to the DNA glycosylase MPG family.

The sequence is that of Putative 3-methyladenine DNA glycosylase from Nitrosospira multiformis (strain ATCC 25196 / NCIMB 11849 / C 71).